A 392-amino-acid polypeptide reads, in one-letter code: S-adenosylmethionine synthase (392 aa).

Histidine 22 is an ATP binding site. Position 24 (aspartate 24) interacts with Mg(2+). K(+) is bound at residue glutamate 50. Residues glutamate 63 and glutamine 106 each coordinate L-methionine. The interval 106–116 is flexible loop; it reads QSPDITQGVTL. Residues 170–172, 236–237, aspartate 245, 251–252, alanine 268, and lysine 272 each bind ATP; these read DGK, KF, and RK. Aspartate 245 provides a ligand contact to L-methionine. Position 276 (lysine 276) interacts with L-methionine.

The protein belongs to the AdoMet synthase family. In terms of assembly, homotetramer; dimer of dimers. It depends on Mg(2+) as a cofactor. The cofactor is K(+).

The protein resides in the cytoplasm. It catalyses the reaction L-methionine + ATP + H2O = S-adenosyl-L-methionine + phosphate + diphosphate. Its pathway is amino-acid biosynthesis; S-adenosyl-L-methionine biosynthesis; S-adenosyl-L-methionine from L-methionine: step 1/1. In terms of biological role, catalyzes the formation of S-adenosylmethionine (AdoMet) from methionine and ATP. The overall synthetic reaction is composed of two sequential steps, AdoMet formation and the subsequent tripolyphosphate hydrolysis which occurs prior to release of AdoMet from the enzyme. This is S-adenosylmethionine synthase from Sulfurimonas denitrificans (strain ATCC 33889 / DSM 1251) (Thiomicrospira denitrificans (strain ATCC 33889 / DSM 1251)).